Reading from the N-terminus, the 855-residue chain is DNA mismatch repair protein MutS (855 aa).

ATP is bound at residue 616 to 623 (GPNMGGKS).

The protein belongs to the DNA mismatch repair MutS family.

This protein is involved in the repair of mismatches in DNA. It is possible that it carries out the mismatch recognition step. This protein has a weak ATPase activity. The chain is DNA mismatch repair protein MutS from Salmonella dublin (strain CT_02021853).